Here is a 698-residue protein sequence, read N- to C-terminus: UvrABC system protein B (698 aa).

Residues 28–414 enclose the Helicase ATP-binding domain; it reads RRILAGERDV…SGGEFVEQVI (387 aa). 41-48 provides a ligand contact to ATP; it reads GATGTGKS. The Beta-hairpin signature appears at 94–117; sequence YYDYYQPEAYIAQTDTYIEKDSSI. The region spanning 432–598 is the Helicase C-terminal domain; the sequence is QIDDLIGEIR…PLRKKIADIL (167 aa). The tract at residues 609–629 is disordered; the sequence is DTVQVGGSGRNVSRGRRAQSE. One can recognise a UVR domain in the interval 653-688; it reads ADLIKDLTAQMMAAASDLQFELAARFRDEIADLKKE.

The protein belongs to the UvrB family. In terms of assembly, forms a heterotetramer with UvrA during the search for lesions. Interacts with UvrC in an incision complex.

It is found in the cytoplasm. In terms of biological role, the UvrABC repair system catalyzes the recognition and processing of DNA lesions. A damage recognition complex composed of 2 UvrA and 2 UvrB subunits scans DNA for abnormalities. Upon binding of the UvrA(2)B(2) complex to a putative damaged site, the DNA wraps around one UvrB monomer. DNA wrap is dependent on ATP binding by UvrB and probably causes local melting of the DNA helix, facilitating insertion of UvrB beta-hairpin between the DNA strands. Then UvrB probes one DNA strand for the presence of a lesion. If a lesion is found the UvrA subunits dissociate and the UvrB-DNA preincision complex is formed. This complex is subsequently bound by UvrC and the second UvrB is released. If no lesion is found, the DNA wraps around the other UvrB subunit that will check the other stand for damage. This is UvrABC system protein B from Mycobacterium leprae (strain TN).